The following is a 482-amino-acid chain: Malvidin galactosylase UGT88C3 (482 aa).

H16 functions as the Proton acceptor in the catalytic mechanism. D117 serves as the catalytic Charge relay. UDP is bound by residues S279, W345, A349, H366, N370, S371, and E374.

This sequence belongs to the UDP-glycosyltransferase family. Highly expressed in leaves, sheaths, pistils and embryos, observed in stems, stem nodes and panicles, and present at low levels in roots.

Its subcellular location is the endoplasmic reticulum. It localises to the nucleus. The enzyme catalyses malvidin + UDP-alpha-D-galactose = malvidin 3-O-beta-D-galactoside + UDP + H(+). The protein operates within pigment biosynthesis; anthocyanin biosynthesis. UDP-glycosyltransferase which uses UDP-galactose and malvidin as substrates to catalyze the biosynthesis of malvidin 3-O-galactoside, an anthocyanin conferring purple pigmentation. This chain is Malvidin galactosylase UGT88C3, found in Oryza sativa subsp. japonica (Rice).